The primary structure comprises 264 residues: S-adenosylmethionine decarboxylase proenzyme (264 aa).

The active-site Schiff-base intermediate with substrate; via pyruvic acid is S113. Pyruvic acid (Ser); by autocatalysis is present on S113. H118 serves as the catalytic Proton acceptor; for processing activity. The active-site Proton donor; for catalytic activity is the C141.

It belongs to the prokaryotic AdoMetDC family. Type 2 subfamily. In terms of assembly, heterooctamer of four alpha and four beta chains arranged as a tetramer of alpha/beta heterodimers. The cofactor is pyruvate. Post-translationally, is synthesized initially as an inactive proenzyme. Formation of the active enzyme involves a self-maturation process in which the active site pyruvoyl group is generated from an internal serine residue via an autocatalytic post-translational modification. Two non-identical subunits are generated from the proenzyme in this reaction, and the pyruvate is formed at the N-terminus of the alpha chain, which is derived from the carboxyl end of the proenzyme. The post-translation cleavage follows an unusual pathway, termed non-hydrolytic serinolysis, in which the side chain hydroxyl group of the serine supplies its oxygen atom to form the C-terminus of the beta chain, while the remainder of the serine residue undergoes an oxidative deamination to produce ammonia and the pyruvoyl group blocking the N-terminus of the alpha chain.

The enzyme catalyses S-adenosyl-L-methionine + H(+) = S-adenosyl 3-(methylsulfanyl)propylamine + CO2. It participates in amine and polyamine biosynthesis; S-adenosylmethioninamine biosynthesis; S-adenosylmethioninamine from S-adenosyl-L-methionine: step 1/1. Its function is as follows. Catalyzes the decarboxylation of S-adenosylmethionine to S-adenosylmethioninamine (dcAdoMet), the propylamine donor required for the synthesis of the polyamines spermine and spermidine from the diamine putrescine. The sequence is that of S-adenosylmethionine decarboxylase proenzyme from Pseudomonas syringae pv. tomato (strain ATCC BAA-871 / DC3000).